Consider the following 434-residue polypeptide: L-2-hydroxyglutarate dehydrogenase, mitochondrial (434 aa).

The protein belongs to the L2HGDH family. It depends on FAD as a cofactor.

The protein localises to the mitochondrion. It catalyses the reaction (S)-2-hydroxyglutarate + A = 2-oxoglutarate + AH2. The protein is L-2-hydroxyglutarate dehydrogenase, mitochondrial of Caenorhabditis briggsae.